Here is a 74-residue protein sequence, read N- to C-terminus: MTVTLIIAALYLALAGAYLLVVPAALYLYLQKRWYVASSWERAFMYFLVFFFFPGLLLLAPLLNFRPRSRQIPA.

Helical transmembrane passes span leucine 5–alanine 25 and alanine 43–leucine 63.

The protein belongs to the complex I NdhL subunit family. NDH-1 can be composed of about 15 different subunits; different subcomplexes with different compositions have been identified which probably have different functions.

It is found in the cellular thylakoid membrane. The catalysed reaction is a plastoquinone + NADH + (n+1) H(+)(in) = a plastoquinol + NAD(+) + n H(+)(out). It catalyses the reaction a plastoquinone + NADPH + (n+1) H(+)(in) = a plastoquinol + NADP(+) + n H(+)(out). Its function is as follows. NDH-1 shuttles electrons from an unknown electron donor, via FMN and iron-sulfur (Fe-S) centers, to quinones in the respiratory and/or the photosynthetic chain. The immediate electron acceptor for the enzyme in this species is believed to be plastoquinone. Couples the redox reaction to proton translocation, and thus conserves the redox energy in a proton gradient. Cyanobacterial NDH-1 also plays a role in inorganic carbon-concentration. This chain is NAD(P)H-quinone oxidoreductase subunit L, found in Synechococcus elongatus (strain ATCC 33912 / PCC 7942 / FACHB-805) (Anacystis nidulans R2).